Consider the following 114-residue polypeptide: Small ribosomal subunit protein bS6 (114 aa).

Belongs to the bacterial ribosomal protein bS6 family.

In terms of biological role, binds together with bS18 to 16S ribosomal RNA. The sequence is that of Small ribosomal subunit protein bS6 from Thermosynechococcus vestitus (strain NIES-2133 / IAM M-273 / BP-1).